We begin with the raw amino-acid sequence, 420 residues long: Serine hydroxymethyltransferase (420 aa).

(6S)-5,6,7,8-tetrahydrofolate is bound by residues Leu-121 and 125-127 (GHL). At Lys-229 the chain carries N6-(pyridoxal phosphate)lysine.

It belongs to the SHMT family. As to quaternary structure, homodimer. Pyridoxal 5'-phosphate serves as cofactor.

The protein localises to the cytoplasm. The catalysed reaction is (6R)-5,10-methylene-5,6,7,8-tetrahydrofolate + glycine + H2O = (6S)-5,6,7,8-tetrahydrofolate + L-serine. The protein operates within one-carbon metabolism; tetrahydrofolate interconversion. It functions in the pathway amino-acid biosynthesis; glycine biosynthesis; glycine from L-serine: step 1/1. In terms of biological role, catalyzes the reversible interconversion of serine and glycine with tetrahydrofolate (THF) serving as the one-carbon carrier. This reaction serves as the major source of one-carbon groups required for the biosynthesis of purines, thymidylate, methionine, and other important biomolecules. Also exhibits THF-independent aldolase activity toward beta-hydroxyamino acids, producing glycine and aldehydes, via a retro-aldol mechanism. The chain is Serine hydroxymethyltransferase from Streptomyces coelicolor (strain ATCC BAA-471 / A3(2) / M145).